We begin with the raw amino-acid sequence, 339 residues long: Phomopsene synthase (339 aa).

The Mg(2+) site is built by Asp89, Asp94, Asn224, Ser228, and Glu232.

The protein belongs to the terpene synthase family. It depends on Mg(2+) as a cofactor.

The enzyme catalyses (2E,6E,10E)-geranylgeranyl diphosphate = phomopsene + diphosphate. The catalysed reaction is (2E,6E,10E)-geranylgeranyl diphosphate = allokutznerene + diphosphate. It participates in secondary metabolite biosynthesis; terpenoid biosynthesis. Its function is as follows. Diterpene synthase that catalyzes the conversion of geranylgeranyl diphosphate (GGPP) to phomopsene, a diterpene previously reported from the fungus P.amygdali. Phomopsene is the main product, but the enzyme can also produce allokutznerene (about 50% of phomopsene production activity) and traces of spiroviolene. Cannot use geranyl diphosphate (GPP), farnesyl diphosphate (FPP) and geranylfarnesyl diphosphate (GFPP). This chain is Phomopsene synthase, found in Allokutzneria albata (Kibdelosporangium albatum).